A 514-amino-acid chain; its full sequence is MATPQFSCLLPAFFLLVVFLFLLIKELRRYKSPKTTQKLPPGPPMLPIIGNLHQMASSLPHQNLKKLADKYGPLMHLKLGEISAVAVSSPRLAKEVLQTRGLAFADRPQSVVAKLMLHNCLGVTFSRYGDYWRQLRQIFAMELLSSKSVQSFSTIMEDELFAMVKSIESEAGRPIILADKLISYLYATLSRATLGRVCKGKETLIEVTGETLALSGAQSLEDIFPSVKIFAYLNPLRPKVRKLFNRIDGVLEDIINQQEKKLLSARVDNDQLQPEENDMLSVLLKLRNGKDSKVQVTNNDIKAIIFELFLAGTVGSSTTVEWAMSEMMKNPKVMEKAQHEVREVLKGKKRICQSDIQKLSYLKLVVKETLRLHPPAPLLFPRECRGQCEVDGYTIPAKAMVMVNCWALGRDPEHWIEADKFEPERFKNSSIDFIGNHFEYIPFGAGRRICPGISFGATNVELLLAALLYHFDWELAGGMHPKDLDMLELFGPGCTRKNPLSVIPSICIPSHDDN.

A helical membrane pass occupies residues 4–24; that stretch reads PQFSCLLPAFFLLVVFLFLLI. A glycan (N-linked (GlcNAc...) asparagine) is linked at N428. Residue C450 coordinates heme.

The protein belongs to the cytochrome P450 family. Requires heme as cofactor.

It localises to the membrane. It carries out the reaction tetrahydroalstonine + A + reduced [NADPH--hemoprotein reductase] + O2 = alstonine + AH2 + oxidized [NADPH--hemoprotein reductase] + 2 H2O + H(+). Its pathway is alkaloid biosynthesis. Its function is as follows. A cytochrome P450 monooxygenase involved in the biosynthesis of pentacyclic alkaloids natural products such as alstonine, putative antipsychotic compounds. Catalyzes the conversion of tetrahydroalstonine to alstonine. No oxidative activity towards ajmalicine. In Alstonia scholaris (Dogbane), this protein is Alstonine synthase.